A 445-amino-acid polypeptide reads, in one-letter code: Na(+)-translocating NADH-quinone reductase subunit A (445 aa).

This sequence belongs to the NqrA family. In terms of assembly, composed of six subunits; NqrA, NqrB, NqrC, NqrD, NqrE and NqrF.

The catalysed reaction is a ubiquinone + n Na(+)(in) + NADH + H(+) = a ubiquinol + n Na(+)(out) + NAD(+). In terms of biological role, NQR complex catalyzes the reduction of ubiquinone-1 to ubiquinol by two successive reactions, coupled with the transport of Na(+) ions from the cytoplasm to the periplasm. NqrA to NqrE are probably involved in the second step, the conversion of ubisemiquinone to ubiquinol. The polypeptide is Na(+)-translocating NADH-quinone reductase subunit A (Pseudomonas aeruginosa (strain UCBPP-PA14)).